A 183-amino-acid polypeptide reads, in one-letter code: Glutathione-regulated potassium-efflux system ancillary protein KefG (183 aa).

This sequence belongs to the NAD(P)H dehydrogenase (quinone) family. KefG subfamily. In terms of assembly, interacts with KefB.

Its subcellular location is the cell inner membrane. It catalyses the reaction a quinone + NADH + H(+) = a quinol + NAD(+). The catalysed reaction is a quinone + NADPH + H(+) = a quinol + NADP(+). In terms of biological role, regulatory subunit of a potassium efflux system that confers protection against electrophiles. Required for full activity of KefB. This Serratia proteamaculans (strain 568) protein is Glutathione-regulated potassium-efflux system ancillary protein KefG.